The primary structure comprises 876 residues: Valine--tRNA ligase (876 aa).

Positions 44–54 match the 'HIGH' region motif; sequence PNVTGKLHLGH. A 'KMSKS' region motif is present at residues 520–524; it reads KMSKS. Residue K523 participates in ATP binding. Positions 805 to 876 form a coiled coil; that stretch reads LEGLIDMDKE…VKSRIEQLKA (72 aa).

The protein belongs to the class-I aminoacyl-tRNA synthetase family. ValS type 1 subfamily. As to quaternary structure, monomer.

The protein resides in the cytoplasm. It catalyses the reaction tRNA(Val) + L-valine + ATP = L-valyl-tRNA(Val) + AMP + diphosphate. In terms of biological role, catalyzes the attachment of valine to tRNA(Val). As ValRS can inadvertently accommodate and process structurally similar amino acids such as threonine, to avoid such errors, it has a 'posttransfer' editing activity that hydrolyzes mischarged Thr-tRNA(Val) in a tRNA-dependent manner. This chain is Valine--tRNA ligase, found in Staphylococcus epidermidis (strain ATCC 35984 / DSM 28319 / BCRC 17069 / CCUG 31568 / BM 3577 / RP62A).